We begin with the raw amino-acid sequence, 60 residues long: Probable tautomerase SAG1079 (60 aa).

The active-site Proton acceptor; via imino nitrogen is the P2.

Belongs to the 4-oxalocrotonate tautomerase family.

In Streptococcus agalactiae serotype V (strain ATCC BAA-611 / 2603 V/R), this protein is Probable tautomerase SAG1079.